An 85-amino-acid chain; its full sequence is Small ribosomal subunit protein bS20 (85 aa).

This sequence belongs to the bacterial ribosomal protein bS20 family.

Its function is as follows. Binds directly to 16S ribosomal RNA. The chain is Small ribosomal subunit protein bS20 from Lactobacillus johnsonii (strain CNCM I-12250 / La1 / NCC 533).